The sequence spans 313 residues: Dihydroorotate dehydrogenase B (NAD(+)), catalytic subunit (313 aa).

Residues S21 and 45 to 46 (KA) contribute to the FMN site. Substrate contacts are provided by residues K45 and 69–73 (NAIGL). FMN is bound by residues N99 and N127. Substrate is bound at residue N127. C130 functions as the Nucleophile in the catalytic mechanism. I191 contributes to the FMN binding site. 192–193 (NT) contributes to the substrate binding site. FMN contacts are provided by residues G217, 243-244 (GG), and 265-266 (GT).

Belongs to the dihydroorotate dehydrogenase family. Type 1 subfamily. As to quaternary structure, heterotetramer of 2 PyrK and 2 PyrD type B subunits. It depends on FMN as a cofactor.

Its subcellular location is the cytoplasm. It catalyses the reaction (S)-dihydroorotate + NAD(+) = orotate + NADH + H(+). It functions in the pathway pyrimidine metabolism; UMP biosynthesis via de novo pathway; orotate from (S)-dihydroorotate (NAD(+) route): step 1/1. Functionally, catalyzes the conversion of dihydroorotate to orotate with NAD(+) as electron acceptor. The chain is Dihydroorotate dehydrogenase B (NAD(+)), catalytic subunit (pyrD) from Bacillus caldolyticus.